A 152-amino-acid polypeptide reads, in one-letter code: Large-conductance mechanosensitive channel (152 aa).

The next 3 helical transmembrane spans lie at 21 to 41 (IDLA…DSLV), 44 to 64 (VVMP…NKFL), and 92 to 112 (GNFI…FWMV).

This sequence belongs to the MscL family. In terms of assembly, homopentamer.

It localises to the cell inner membrane. Its function is as follows. Channel that opens in response to stretch forces in the membrane lipid bilayer. May participate in the regulation of osmotic pressure changes within the cell. This is Large-conductance mechanosensitive channel from Bordetella pertussis (strain Tohama I / ATCC BAA-589 / NCTC 13251).